Here is a 665-residue protein sequence, read N- to C-terminus: F-box/WD repeat-containing protein lin-23 (665 aa).

Positions 81–127 (RDFISNLPAHLVELILFNVNSDSLKSCEEVSTSWRCALARGQHWKKL) constitute an F-box domain. WD repeat units lie at residues 220-257 (ENSK…CSRI), 260-299 (GHTG…KTLI), 301-337 (HCEA…DITI), 343-380 (GHRA…FVRT), 383-420 (GHRR…CLRV), 423-460 (GHEE…DPRA), and 472-509 (QHTG…PSGL). The tract at residues 574–665 (AAAEAARGAG…VDEEMPDGGP (92 aa)) is disordered. 2 stretches are compositionally biased toward acidic residues: residues 584–595 (DNDESSSEEDLD) and 655–665 (DVDEEMPDGGP).

In terms of assembly, part of a SCF (SKP1-cullin-F-box) protein ligase complex.

It localises to the cytoplasm. Functions cell autonomously to negatively regulate cell cycle progression. Required to restrain cell proliferation in response to developmental cues. Probably recognizes and binds to some proteins and promotes their ubiquitination and degradation. In Caenorhabditis elegans, this protein is F-box/WD repeat-containing protein lin-23 (lin-23).